Reading from the N-terminus, the 730-residue chain is Ribosomal RNA large subunit methyltransferase K/L (730 aa).

Positions 46 to 157 constitute a THUMP domain; the sequence is TAYRLCVWSR…RGEAILSLDL (112 aa). Residues 394–418 are disordered; it reads GERREAQPEGTEARQQVPQASEPAR.

The protein belongs to the methyltransferase superfamily. RlmKL family.

It is found in the cytoplasm. It catalyses the reaction guanosine(2445) in 23S rRNA + S-adenosyl-L-methionine = N(2)-methylguanosine(2445) in 23S rRNA + S-adenosyl-L-homocysteine + H(+). The catalysed reaction is guanosine(2069) in 23S rRNA + S-adenosyl-L-methionine = N(2)-methylguanosine(2069) in 23S rRNA + S-adenosyl-L-homocysteine + H(+). Specifically methylates the guanine in position 2445 (m2G2445) and the guanine in position 2069 (m7G2069) of 23S rRNA. The polypeptide is Ribosomal RNA large subunit methyltransferase K/L (Pseudomonas putida (strain ATCC 47054 / DSM 6125 / CFBP 8728 / NCIMB 11950 / KT2440)).